Here is a 184-residue protein sequence, read N- to C-terminus: Ras-related protein Rap-1A (184 aa).

Residues 10-18 (GSGGVGKSA), 29-35 (VEKYDPT), Gly-60, and 116-119 (NKCD) each bind GTP. Residues 32–40 (YDPTIEDSY) carry the Effector region motif. Cys-181 bears the Cysteine methyl ester mark. Cys-181 is lipidated: S-geranylgeranyl cysteine. Positions 182-184 (LLL) are cleaved as a propeptide — removed in mature form.

The protein belongs to the small GTPase superfamily. Ras family. In terms of assembly, found in a complex, at least composed of ITGB1BP1, KRIT1 and RAP1A. Interacts (active GTP-bound form preferentially) with KRIT1 (via C-terminus FERM domain); the interaction does not induce the opening conformation of KRIT1. Found in a complex composed of CDH1, RAP1A and PKP3; PKP3 acts as a scaffold protein within the complex, the complex is required for CDH1 localization to mature desmosome cell junctions. In its GTP-bound form interacts with PLCE1 and RADIL. Interacts with SGSM1, SGSM2 and SGSM3. Interacts (via GTP-bound active form) with RAPGEF2 (via Ras-associating domain). Interacts with TBC1D21. Interacts with RAP1GDS1.

It localises to the cell membrane. Its subcellular location is the cytoplasm. The protein resides in the perinuclear region. The protein localises to the cell junction. It is found in the early endosome. It catalyses the reaction GTP + H2O = GDP + phosphate + H(+). Activated by guanine nucleotide-exchange factors (GEF) EPAC and EPAC2 in a cAMP-dependent manner, and GFR. Its function is as follows. Counteracts the mitogenic function of Ras, at least partly because it can interact with Ras GAPs and RAF in a competitive manner. Together with ITGB1BP1, regulates KRIT1 localization to microtubules and membranes. Plays a role in nerve growth factor (NGF)-induced neurite outgrowth. Plays a role in the regulation of embryonic blood vessel formation. Involved in the establishment of basal endothelial barrier function. Facilitates the progressive accumulation of CDH1 at mature desmosome junctions via cAMP-dependent signaling and its interaction with PKP3. May be involved in the regulation of the vascular endothelial growth factor receptor KDR expression at endothelial cell-cell junctions. The sequence is that of Ras-related protein Rap-1A (RAP1A) from Bos taurus (Bovine).